Here is a 788-residue protein sequence, read N- to C-terminus: Ribonucleoside-diphosphate reductase subunit alpha (788 aa).

The ATP-cone domain maps to 2–92 (ITVVKRNGRI…LYDLYHKVSG (91 aa)). ATP-binding positions include lysine 6, 12-18 (EPLDITK), and threonine 52. GDP is bound at residue threonine 200. Cysteine 216 and cysteine 497 form a disulfide bridge. DTTP-binding positions include 223 to 225 (DNI) and arginine 253. Residue asparagine 424 coordinates GDP. The Proton acceptor role is filled by asparagine 424. The Cysteine radical intermediate role is filled by cysteine 426. Residues glutamate 428 and 661–663 (SSI) contribute to the GDP site. Residue glutamate 428 is the Proton acceptor of the active site.

Belongs to the ribonucleoside diphosphate reductase large chain family. In terms of assembly, tetramer of two alpha and two beta subunits.

The catalysed reaction is a 2'-deoxyribonucleoside 5'-diphosphate + [thioredoxin]-disulfide + H2O = a ribonucleoside 5'-diphosphate + [thioredoxin]-dithiol. Under complex allosteric control mediated by deoxynucleoside triphosphates and ATP binding to separate specificity and activation sites on the alpha subunit. The type of nucleotide bound at the specificity site determines substrate preference. It seems probable that ATP makes the enzyme reduce CDP and UDP, dGTP favors ADP reduction and dTTP favors GDP reduction. Stimulated by ATP and inhibited by dATP binding to the activity site. In terms of biological role, provides the precursors necessary for DNA synthesis. Catalyzes the biosynthesis of deoxyribonucleotides from the corresponding ribonucleotides. This is Ribonucleoside-diphosphate reductase subunit alpha (nrdA) from Helicobacter pylori (strain J99 / ATCC 700824) (Campylobacter pylori J99).